The following is a 469-amino-acid chain: Probable ribonuclease FAU-1 (469 aa).

The protein belongs to the FAU-1 family.

Probable RNase involved in rRNA stability through maturation and/or degradation of precursor rRNAs. Binds to RNA in loop regions with AU-rich sequences. In Pyrococcus abyssi (strain GE5 / Orsay), this protein is Probable ribonuclease FAU-1.